The following is a 79-amino-acid chain: Acyl carrier protein (79 aa).

The Carrier domain occupies 4 to 79; it reads AEIKDKVYDI…QAIDYIVNKK (76 aa). S39 carries the O-(pantetheine 4'-phosphoryl)serine modification.

It belongs to the acyl carrier protein (ACP) family. Post-translationally, 4'-phosphopantetheine is transferred from CoA to a specific serine of apo-ACP by AcpS. This modification is essential for activity because fatty acids are bound in thioester linkage to the sulfhydryl of the prosthetic group.

The protein resides in the cytoplasm. It functions in the pathway lipid metabolism; fatty acid biosynthesis. Carrier of the growing fatty acid chain in fatty acid biosynthesis. This chain is Acyl carrier protein, found in Pelodictyon phaeoclathratiforme (strain DSM 5477 / BU-1).